The sequence spans 49 residues: Large ribosomal subunit protein bL33A (49 aa).

It belongs to the bacterial ribosomal protein bL33 family.

This Staphylococcus aureus (strain COL) protein is Large ribosomal subunit protein bL33A.